Consider the following 627-residue polypeptide: (-)-alpha-terpineol synthase, chloroplastic (627 aa).

A chloroplast-targeting transit peptide spans 1–52; that stretch reads MDLISVLPSASKSCVCLHKPLSSSTHKLKPFCKTIRILVMPRRWEFARPSMS. The Mg(2+) site is built by D378, D382, and D530. The DDXXD motif motif lies at 378-382; sequence DDMYD.

This sequence belongs to the terpene synthase family. Tpsd subfamily. Requires Mg(2+) as cofactor. Mn(2+) is required as a cofactor.

It localises to the plastid. It is found in the chloroplast. It carries out the reaction (2E)-geranyl diphosphate + H2O = (S)-alpha-terpineol + diphosphate. The protein operates within terpene metabolism; oleoresin biosynthesis. Involved in defensive oleoresin formation in conifers in response to insect attack or other injury. Involved in monoterpene (C10) olefins biosynthesis. Produces 57.3% alpha-terpineol (15.1% (+)/84.9% (-)), 27.6% limonene (25.2% (+)/74.8% (-)), 8% terpinolene, 4.7% beta-pinene (14.8% (+)/85.2% (-)), 1.3% alpha-pinene (100% (+)) and 1.1% myrcene. This is (-)-alpha-terpineol synthase, chloroplastic (PT10) from Pinus taeda (Loblolly pine).